Here is a 216-residue protein sequence, read N- to C-terminus: Chloramphenicol acetyltransferase (216 aa).

Catalysis depends on His-186, which acts as the Proton acceptor.

The protein belongs to the chloramphenicol acetyltransferase family. In terms of assembly, homotrimer.

The enzyme catalyses chloramphenicol + acetyl-CoA = chloramphenicol 3-acetate + CoA. Its function is as follows. This enzyme is an effector of chloramphenicol resistance in bacteria. This Vibrio anguillarum (Listonella anguillarum) protein is Chloramphenicol acetyltransferase (cat).